The following is a 497-amino-acid chain: Delayed-rectifier potassium channel regulatory subunit KCNS1 (497 aa).

Residues M1–L186 are Cytoplasmic-facing. The chain crosses the membrane as a helical span at residues P187–I208. Residues H209–P239 are Extracellular-facing. The helical transmembrane segment at V240–L262 threads the bilayer. Topologically, residues A263–P273 are cytoplasmic. Residues L274–A291 traverse the membrane as a helical segment. Residues G292–L309 lie on the Extracellular side of the membrane. A helical; Voltage-sensor membrane pass occupies residues G310–H330. Residues S331–Y345 are Cytoplasmic-facing. A helical membrane pass occupies residues R346–Y367. At T368–I379 the chain is on the extracellular side. The segment at residues P380–T391 is an intramembrane region (helical). A Selectivity filter motif is present at residues T392–D397. The stretch at T392–V399 is an intramembrane region. Over P400 to K406 the chain is Extracellular. Residues L407–Y435 form a helical membrane-spanning segment. Residues R436–Y497 lie on the Cytoplasmic side of the membrane. The tract at residues S464 to Y497 is disordered. The segment covering T470–D482 has biased composition (basic and acidic residues).

It belongs to the potassium channel family. S (TC 1.A.1.2) subfamily. Kv9.1/KCNS1 sub-subfamily. Heterotetramer with KCNB1 and KCNB2. Does not form homomultimers. As to expression, detected in brain, but not in the other tissues tested. The highest levels of expression are in olfactory bulb, cerebral cortex, hippocampus, habenula, basolateral amygdaloid nuclei and cerebellum.

It is found in the cell membrane. Its function is as follows. Potassium channel regulatory subunit that modulate the delayed rectifier voltage-gated potassium channel activity of KCNB1 and KCNB2 by altering their kinetics, expression levels, and shifting the half-inactivation potential to more polarized values. While it does not form functional channels on its own, it can form functional heterotetrameric channels with KCNB1 and KCNB2. Each regulatory subunit has unique regulatory properties that can lead to extensive inhibition, significant changes in kinetics, and/or substantial shifts in the voltage dependencies of the inactivation process. This chain is Delayed-rectifier potassium channel regulatory subunit KCNS1, found in Mus musculus (Mouse).